The chain runs to 470 residues: Putative multidrug resistance protein MdtD (470 aa).

The Periplasmic portion of the chain corresponds to 1 to 11 (MTELPDNTRWQ). A helical transmembrane segment spans residues 12-32 (LWIVAFGFFMQSLDTTIVNTA). At 33-48 (LPSMAKSLGESPLHMH) the chain is on the cytoplasmic side. Residues 49-69 (MVVVSYVLTVAVMLPASGWLA) traverse the membrane as a helical segment. At 70–76 (DKIGVRN) the chain is on the periplasmic side. Residues 77–97 (IFFAAIVLFTLGSLFCALSGT) traverse the membrane as a helical segment. Residues 98–101 (LNQL) are Cytoplasmic-facing. The chain crosses the membrane as a helical span at residues 102–124 (VLARVLQGVGGAMMVPVGRLTVM). Residues 125-137 (KIVPRAQYMAAMT) are Periplasmic-facing. Residues 138-158 (FVTLPGQIGPLLGPALGGVLV) traverse the membrane as a helical segment. The Cytoplasmic portion of the chain corresponds to 159-164 (EYASWH). A helical membrane pass occupies residues 165 to 185 (WIFLINIPVGIVGAMATFMLM). Over 186 to 196 (PNYIIETRRFD) the chain is Periplasmic. The helical transmembrane segment at 197–217 (LPGFLLLAIGMAVLTLALDGS) threads the bilayer. The Cytoplasmic portion of the chain corresponds to 218–224 (KSMGISP). A helical transmembrane segment spans residues 225–245 (WTLAGLAAGGAAAILLYLFHA). Residues 246 to 262 (KKNSGALFSLRLFRTPT) lie on the Periplasmic side of the membrane. The chain crosses the membrane as a helical span at residues 263 to 283 (FSLGLLGSFAGRIGSGMLPFM). Topologically, residues 284 to 285 (TP) are cytoplasmic. The chain crosses the membrane as a helical span at residues 286–306 (VFLQIGLGFSPFHAGLMMIPM). Residues 307-341 (VLGSMGMKRIVVQIVNRFGYRRVLVATTLGLALVS) lie on the Periplasmic side of the membrane. The helical transmembrane segment at 342–362 (LLFMSVALLGWYYLLPLVLLL) threads the bilayer. Residues 363–395 (QGMVNSARFSSMNTLTLKDLPDTLASSGNSLLS) are Cytoplasmic-facing. A helical transmembrane segment spans residues 396–416 (MIMQLSMSIGVTIAGMLLGMF). Residues 417–430 (GQQHIGIDSSATHH) are Periplasmic-facing. The chain crosses the membrane as a helical span at residues 431 to 451 (VFMYTWLCMAVIIALPAIIFA). At 452 to 470 (RVPNDTQQNMVISRRKRSL) the chain is on the cytoplasmic side.

The protein belongs to the major facilitator superfamily. TCR/Tet family.

It localises to the cell inner membrane. This is Putative multidrug resistance protein MdtD from Salmonella typhimurium (strain LT2 / SGSC1412 / ATCC 700720).